The sequence spans 115 residues: NADH-ubiquinone oxidoreductase chain 3 (115 aa).

3 consecutive transmembrane segments (helical) span residues 4-24 (IVILFINATLSLGLITVAFWL), 55-75 (FFLIGITFLLFDLEITLLLPL), and 84-104 (TYFTMLVSFLLVSVLALGLMY).

This sequence belongs to the complex I subunit 3 family. Core subunit of respiratory chain NADH dehydrogenase (Complex I) which is composed of 45 different subunits. Interacts with TMEM186. Interacts with TMEM242.

Its subcellular location is the mitochondrion inner membrane. The enzyme catalyses a ubiquinone + NADH + 5 H(+)(in) = a ubiquinol + NAD(+) + 4 H(+)(out). Functionally, core subunit of the mitochondrial membrane respiratory chain NADH dehydrogenase (Complex I) which catalyzes electron transfer from NADH through the respiratory chain, using ubiquinone as an electron acceptor. Essential for the catalytic activity of complex I. This is NADH-ubiquinone oxidoreductase chain 3 from Eligmodontia typus (Highland gerbil mouse).